Here is a 296-residue protein sequence, read N- to C-terminus: NAD kinase (296 aa).

Catalysis depends on D72, which acts as the Proton acceptor. Residues 72–73 (DG), 146–147 (ND), R157, K174, D176, 187–192 (TAYALS), and Q247 contribute to the NAD(+) site.

Belongs to the NAD kinase family. It depends on a divalent metal cation as a cofactor.

It is found in the cytoplasm. The enzyme catalyses NAD(+) + ATP = ADP + NADP(+) + H(+). In terms of biological role, involved in the regulation of the intracellular balance of NAD and NADP, and is a key enzyme in the biosynthesis of NADP. Catalyzes specifically the phosphorylation on 2'-hydroxyl of the adenosine moiety of NAD to yield NADP. The polypeptide is NAD kinase (Pseudomonas fluorescens (strain Pf0-1)).